The following is a 653-amino-acid chain: Probable syringafactin export ATP-binding/permease protein SyfD (653 aa).

One can recognise an ABC transporter domain in the interval 6–244; that stretch reads LELNGVTRRF…NEKTTERLPT (239 aa). Residue 42–49 participates in ATP binding; the sequence is GASGSGKS. Transmembrane regions (helical) follow at residues 252–272, 278–298, 526–546, 583–603, and 616–636; these read LMANIGLFQEAFVMAWVALIS, LLTMLGIIIGITSVVSIVAIG, LALLLSLIAVISLAVGGIGVM, MVCLIGGVIGISLSFVIGYVF, and LGSIVTAFICSTLIGIVFGFV.

The protein belongs to the ABC transporter superfamily. Macrolide exporter (TC 3.A.1.122) family. In terms of assembly, probably part of a tripartite efflux system, which is composed of an inner membrane transporter, a periplasmic membrane fusion protein, and an outer membrane component.

The protein resides in the cell inner membrane. In terms of biological role, probably involved in the export of syringafactins. The protein is Probable syringafactin export ATP-binding/permease protein SyfD of Pseudomonas syringae pv. syringae (strain B728a).